The primary structure comprises 811 residues: tRNA(Met) cytidine acetyltransferase TmcA (811 aa).

Residues glutamine 267 and arginine 440 each contribute to the ATP site. In terms of domain architecture, N-acetyltransferase spans 474 to 663; sequence RKEVYLEEPD…GEFTAIVLKP (190 aa). Acetyl-CoA-binding positions include 590 to 592, glutamate 630, and arginine 637; that span reads IAT.

This sequence belongs to the TmcA family.

It is found in the cytoplasm. The catalysed reaction is cytidine(34) in elongator tRNA(Met) + acetyl-CoA + ATP + H2O = N(4)-acetylcytidine(34) in elongator tRNA(Met) + ADP + phosphate + CoA + H(+). It catalyses the reaction a cytidine in RNA + acetyl-CoA + ATP + H2O = an N(4)-acetylcytidine in RNA + ADP + phosphate + CoA + H(+). It carries out the reaction a cytidine in tRNA + acetyl-CoA + ATP + H2O = an N(4)-acetylcytidine in tRNA + ADP + phosphate + CoA + H(+). The enzyme catalyses a cytidine in mRNA + acetyl-CoA + ATP + H2O = an N(4)-acetylcytidine in mRNA + ADP + phosphate + CoA + H(+). Catalyzes the formation of N(4)-acetylcytidine (ac(4)C) at the wobble position of tRNA(Met), by using acetyl-CoA as an acetyl donor and ATP (or GTP). Functionally, catalyzes the formation of 404 N(4)-acetylcytidine (ac(4)C) sites in RNA, almost always on the middle C of a CCG motif. There 173 ac(4)C sites in rRNA, 35 in non-coding (nc)RNA, 119 in mRNA and 77 in tRNA. More acetylation is observed at 85 and 95 than at 65 or 75 degrees Celsius. This chain is tRNA(Met) cytidine acetyltransferase TmcA, found in Thermococcus kodakarensis (strain ATCC BAA-918 / JCM 12380 / KOD1) (Pyrococcus kodakaraensis (strain KOD1)).